A 345-amino-acid chain; its full sequence is Mycothiol acetyltransferase (345 aa).

2 consecutive N-acetyltransferase domains span residues 6-149 (DTYE…KAME) and 164-345 (FEVL…RGRL). A 1D-myo-inositol 2-(L-cysteinylamino)-2-deoxy-alpha-D-glucopyranoside-binding site is contributed by glutamate 39. 76-78 (LAV) is an acetyl-CoA binding site. 1D-myo-inositol 2-(L-cysteinylamino)-2-deoxy-alpha-D-glucopyranoside-binding residues include glutamate 198, lysine 261, and glutamate 277. Residues 281-283 (VCL) and 288-294 (RGRGLGQ) contribute to the acetyl-CoA site. Tyrosine 315 serves as a coordination point for 1D-myo-inositol 2-(L-cysteinylamino)-2-deoxy-alpha-D-glucopyranoside.

Belongs to the acetyltransferase family. MshD subfamily. As to quaternary structure, monomer.

It carries out the reaction 1D-myo-inositol 2-(L-cysteinylamino)-2-deoxy-alpha-D-glucopyranoside + acetyl-CoA = mycothiol + CoA + H(+). Catalyzes the transfer of acetyl from acetyl-CoA to desacetylmycothiol (Cys-GlcN-Ins) to form mycothiol. The chain is Mycothiol acetyltransferase from Corynebacterium jeikeium (strain K411).